The chain runs to 492 residues: Cholesteryl ester transfer protein (492 aa).

Residues 1–17 form the signal peptide; the sequence is MLAVTLLSLALLGSTCA. A disulfide bond links cysteine 160 and cysteine 201. Asparagine 257 carries N-linked (GlcNAc...) asparagine glycosylation.

This sequence belongs to the BPI/LBP/Plunc superfamily. BPI/LBP family.

It localises to the secreted. It carries out the reaction cholesteryl (9Z-octadecenoate)(in) = cholesteryl (9Z-octadecenoate)(out). It catalyses the reaction 1,2,3-tri-(9Z-octadecenoyl)-glycerol(in) = 1,2,3-tri-(9Z-octadecenoyl)-glycerol(out). The enzyme catalyses cholesteryl (9Z,12Z)-octadecadienoate(in) = cholesteryl (9Z,12Z)-octadecadienoate(out). Its function is as follows. Involved in the transfer of neutral lipids, including cholesteryl ester and triglyceride, among lipoprotein particles. Allows the net movement of cholesteryl ester from high density lipoproteins/HDL to triglyceride-rich very low density lipoproteins/VLDL, and the equimolar transport of triglyceride from VLDL to HDL. Regulates the reverse cholesterol transport, by which excess cholesterol is removed from peripheral tissues and returned to the liver for elimination. In Cricetulus griseus (Chinese hamster), this protein is Cholesteryl ester transfer protein.